We begin with the raw amino-acid sequence, 2116 residues long: Myosin-2 heavy chain (2116 aa).

Residues 30-82 (SDKRYIWYNPDPKERDSYECGEIVSETSDSFTFKTVDGQDRQVKKDDANQRNP) form the Myosin N-terminal SH3-like domain. Positions 86 to 759 (DGVEDMSELS…QLARIEEARE (674 aa)) constitute a Myosin motor domain. Lysine 130 is subject to N6,N6-dimethyllysine. 179-186 (GESGAGKT) serves as a coordination point for ATP. 2 actin-binding regions span residues 638–660 (LASL…IPNN) and 738–752 (RFGI…GQLA). Positions 762–791 (ISEIIKAIQAATRGWIARKVYKQAREHTVA) constitute an IQ domain. Residues 817–2116 (ARPLLKRRNF…MADFFGGFKA (1300 aa)) are a coiled coil. Disordered regions lie at residues 1295–1314 (VNEQ…KRKV), 1363–1399 (DKSV…SKKK), 1415–1444 (TAKK…DAKN), 1711–1731 (VRDQ…SKRR), 1771–1791 (LEDE…LESE), and 1805–1844 (NRSR…AAKL). Basic and acidic residues-rich tracts occupy residues 1375–1399 (KNEE…SKKK), 1415–1443 (TAKK…DDAK), and 1722–1731 (RSELEDSKRR). The span at 1805-1832 (NRSRAEKDRKKYEKDLKDTKYKLNDEAA) shows a compositional bias: basic and acidic residues. Phosphothreonine; by MHCK is present on residues threonine 1823, threonine 1833, and threonine 2029.

This sequence belongs to the TRAFAC class myosin-kinesin ATPase superfamily. Myosin family. As to quaternary structure, myosin-2 heavy chain is two-headed. It self-assembles into filaments. Hexamer of 2 heavy chain subunits (MHC), 2 alkali light chain subunits (MLC) and 2 regulatory light chain subunits (MLC-2). Associates with elmoA. In terms of processing, phosphorylation inhibits thick filament formation and reduces the actin-activated ATPase activity.

The protein localises to the cytoplasm. Its subcellular location is the cell cortex. Its function is as follows. Myosin is a protein that binds to actin and has ATPase activity that is activated by actin. This Dictyostelium discoideum (Social amoeba) protein is Myosin-2 heavy chain (mhcA).